The following is a 329-amino-acid chain: BTB/POZ domain-containing adapter for CUL3-mediated RhoA degradation protein 1 (329 aa).

The span at 1–22 (MSAEASGPAAAAAPSLEAPKPS) shows a compositional bias: low complexity. Positions 1 to 31 (MSAEASGPAAAAAPSLEAPKPSGLEPGPAAY) are disordered. The region spanning 41–109 (KYVKLNVGGS…LRDGSVPLPE (69 aa)) is the BTB domain. The segment at 282–303 (ATGGAAGAGGAGRGEDEENREH) is disordered.

Belongs to the BACURD family. As to quaternary structure, homotetramer; forms a two-fold symmetric tetramer in solution. Interacts with CUL3; interaction is direct and forms a 5:5 heterodecamer. Component of the BCR(KCTD13) E3 ubiquitin ligase complex, at least composed of CUL3, KCTD13/BACURD1 and RBX1. Interacts with RHOA; with a preference for RhoA-GDP. Interacts with POLD2 and PCNA. Interacts with SPRTN. As to expression, expressed in a wide variety of tissues.

The protein resides in the nucleus. Its pathway is protein modification; protein ubiquitination. Functionally, substrate-specific adapter of a BCR (BTB-CUL3-RBX1) E3 ubiquitin-protein ligase complex required for synaptic transmission. The BCR(KCTD13) E3 ubiquitin ligase complex mediates the ubiquitination of RHOA, leading to its degradation by the proteasome Degradation of RHOA regulates the actin cytoskeleton and promotes synaptic transmission. This Homo sapiens (Human) protein is BTB/POZ domain-containing adapter for CUL3-mediated RhoA degradation protein 1 (KCTD13).